Consider the following 375-residue polypeptide: Porin Omp2b (375 aa).

Residues 1-22 (MNIKSLLLGSAAALVAASGAQA) form the signal peptide.

This sequence belongs to the alphaproteobacteria porin family. In terms of assembly, homotrimer.

It localises to the cell outer membrane. Forms passive diffusion pores that allow small molecular weight hydrophilic materials across the outer membrane. This Brucella suis protein is Porin Omp2b (omp2b).